Consider the following 509-residue polypeptide: Ribonuclease E/G-like protein (509 aa).

The region spanning 35-117 is the S1 motif domain; sequence SDIYLGCVDK…LTANITLSGR (83 aa). Mg(2+) contacts are provided by Asp-296 and Asp-339.

It belongs to the RNase E/G family. It depends on Mg(2+) as a cofactor.

Its subcellular location is the plastid. It is found in the chloroplast stroma. In terms of biological role, involved in intercistronic processing of primary transcripts from chloroplast operons. The endonucleolytic activity of the enzyme depends on the number of phosphates at the 5' end, is inhibited by structured RNA, and preferentially cleaves A/U-rich sequences. This chain is Ribonuclease E/G-like protein (rne), found in Pyropia yezoensis (Susabi-nori).